We begin with the raw amino-acid sequence, 459 residues long: Glycosyl hydrolase family 109 protein (459 aa).

Positions 1 to 31 (MHNIHRRNFLKAAGAATAGLVTANIALNAYA) form a signal peptide, tat-type signal. NAD(+)-binding positions include 64–65 (ER), D86, 135–138 (WEWH), 155–156 (EV), and N184. Residues Y213, R232, 244 to 247 (YPTH), and Y326 contribute to the substrate site. Position 244 (Y244) interacts with NAD(+).

It belongs to the Gfo/Idh/MocA family. Glycosyl hydrolase 109 subfamily. Requires NAD(+) as cofactor. In terms of processing, predicted to be exported by the Tat system. The position of the signal peptide cleavage has not been experimentally proven.

In terms of biological role, glycosidase. In Shewanella baltica (strain OS195), this protein is Glycosyl hydrolase family 109 protein.